The sequence spans 928 residues: TBC1 domain family member 2A (928 aa).

Position 1 is an N-acetylmethionine (Met1). Residues 1 to 19 (MEGAGENAPESSSSAPGSE) show a composition bias toward low complexity. Residues 1–39 (MEGAGENAPESSSSAPGSEESARDPQVPPPEEESGDCAR) form a disordered region. Residues 1 to 169 (MEGAGENAPE…AGNGPVLHLE (169 aa)) are interaction with CADH1. The region spanning 45–142 (PKKLCGYLSK…WLQQLQMKRW (98 aa)) is the PH domain. Positions 225–275 (NKQAQGTGHEPPGEDSPQSGEPQREEQPLASDASTPGREPEDSPKPAPKPS) are disordered. The interaction with RAC1 stretch occupies residues 295–433 (SEGITRNRTA…KVTQDFTHPP (139 aa)). Positions 298–416 (ITRNRTAQEK…LMDKNHAKQQ (119 aa)) form a coiled coil. At Ser436 the chain carries Phosphoserine. The Rab-GAP TBC domain maps to 625 to 817 (GVPREHRPRV…RVWDAFLYEG (193 aa)). A coiled-coil region spans residues 875-913 (MKQLRQLRMVHRERLEAELRELEQLKAEYLERRASRRRA). Phosphoserine is present on residues Ser915 and Ser920.

Interacts with activated RAC1 and CDH1. Expressed in a broad range of tissues, especially in kidney, liver, lung and placenta. Also expressed in keratinocytes and epithelia-containing organs. Isoform 2 is differentially expressed in prostate normal and cancer cells (at protein level).

It localises to the cytoplasm. The protein localises to the cytoplasmic vesicle. It is found in the cell junction. Acts as a GTPase-activating protein for RAB7A. Signal effector acting as a linker between RAC1 and RAB7A, leading to RAB7A inactivation and subsequent inhibition of cadherin degradation and reduced cell-cell adhesion. The sequence is that of TBC1 domain family member 2A (TBC1D2) from Homo sapiens (Human).